The chain runs to 301 residues: Fluoroquinolones export ATP-binding protein MT2762 (301 aa).

One can recognise an ABC transporter domain in the interval 18-246 (IRVRGLTFRY…RSRRRVRVEY (229 aa)). 52–59 (GPSGAGKS) contributes to the ATP binding site.

This sequence belongs to the ABC transporter superfamily. In terms of assembly, the complex is composed of 2 ATP-binding proteins and 2 transmembrane proteins.

It localises to the cell membrane. In terms of biological role, part of the ABC transporter complex involved in fluoroquinolones export. Probably responsible for energy coupling to the transport system. In Mycobacterium tuberculosis (strain CDC 1551 / Oshkosh), this protein is Fluoroquinolones export ATP-binding protein MT2762.